A 320-amino-acid chain; its full sequence is Lipoyl synthase (320 aa).

[4Fe-4S] cluster-binding residues include cysteine 67, cysteine 72, cysteine 78, cysteine 93, cysteine 97, cysteine 100, and serine 307. The Radical SAM core domain maps to 79–296; it reads FNHGTATFMI…RDKAEKMGFE (218 aa).

This sequence belongs to the radical SAM superfamily. Lipoyl synthase family. The cofactor is [4Fe-4S] cluster.

The protein localises to the cytoplasm. The enzyme catalyses [[Fe-S] cluster scaffold protein carrying a second [4Fe-4S](2+) cluster] + N(6)-octanoyl-L-lysyl-[protein] + 2 oxidized [2Fe-2S]-[ferredoxin] + 2 S-adenosyl-L-methionine + 4 H(+) = [[Fe-S] cluster scaffold protein] + N(6)-[(R)-dihydrolipoyl]-L-lysyl-[protein] + 4 Fe(3+) + 2 hydrogen sulfide + 2 5'-deoxyadenosine + 2 L-methionine + 2 reduced [2Fe-2S]-[ferredoxin]. The protein operates within protein modification; protein lipoylation via endogenous pathway; protein N(6)-(lipoyl)lysine from octanoyl-[acyl-carrier-protein]: step 2/2. Functionally, catalyzes the radical-mediated insertion of two sulfur atoms into the C-6 and C-8 positions of the octanoyl moiety bound to the lipoyl domains of lipoate-dependent enzymes, thereby converting the octanoylated domains into lipoylated derivatives. The protein is Lipoyl synthase of Histophilus somni (strain 129Pt) (Haemophilus somnus).